The sequence spans 791 residues: MYKSLFFCLKILALLFLIGCGIVAYIIYYYSRDLPDYRQLARYYPPSVTRIYSRDGKLMEEYAFERRVFIPINSIPTSLKESFIAAEDKNFYNHQGVDLFGIVRAAFLNISNFLHHRRMEGASTITQQVVKNFLLTNEVSFQRKIKEAILSYMISRVFTKDQILELYLNQTFFGRGAYGVATAAQNYFNKSVEELTIAESAFIAALPKAPSELNPEKNYARVKARRDYVIMRMLEDGYITSDAAKEAVDSPITLRKRDQDETVTADYYAEQVRDEVIKMLGSKDEFYTSGLTIITSLDAKMQKFAEESLRKGLRDFDRKRGFRKAIATISLDNWQEELKKLPTTPSLLEYKIAVVLEVTDTQAEIGFASGAKSKIPISEMKWAKSELKSAKKLLTKGDVIVVEPVKDYYALRQIPEVNGAIMVMNPNTGQVLTSVGGYDFFASKFDRVTQALRQPGSLSKTFVYLAALENGVKPNQIFNDGPIEISQGPGMPSWRPKNYEGKFLGPITMRTGLEKSRNLVTVRVATAVGLTKIVDIIKRFGINDNPQKVYSMVLGSIETTLERITNAYGIIANGGKRIKPHFVELIKDRNGKVIYRRDDRECTTCNVSDNDLDNAILEIPAENIYMVTDAASDYQITSLLTGVVDRGTAYSAKKLGKVIGGKTGTSNDSKDTWFIGFTPKIVVGSYVGYDTPRTLGRRATGSSVVLPIFIDFMSNAYKDEPPLPFKVPDSVKLQAVDRATGQITPSGSVMEAFKINNILIIEDDSEIIDNNHNNDVFDYVPTEKDQSQEIY.

Residues 1 to 6 (MYKSLF) are Cytoplasmic-facing. Residues 7–27 (FCLKILALLFLIGCGIVAYII) form a helical; Signal-anchor for type II membrane protein membrane-spanning segment. Residues 28 to 791 (YYYSRDLPDY…TEKDQSQEIY (764 aa)) lie on the Periplasmic side of the membrane. Residues 49 to 220 (TRIYSRDGKL…SELNPEKNYA (172 aa)) are transglycosylase. E87 acts as the Proton donor; for transglycosylase activity in catalysis. Residues 398-711 (DVIVVEPVKD…SSVVLPIFID (314 aa)) form a transpeptidase region. The active-site Acyl-ester intermediate; for transpeptidase activity is S457.

It in the N-terminal section; belongs to the glycosyltransferase 51 family. This sequence in the C-terminal section; belongs to the transpeptidase family.

The protein resides in the cell inner membrane. It catalyses the reaction [GlcNAc-(1-&gt;4)-Mur2Ac(oyl-L-Ala-gamma-D-Glu-L-Lys-D-Ala-D-Ala)](n)-di-trans,octa-cis-undecaprenyl diphosphate + beta-D-GlcNAc-(1-&gt;4)-Mur2Ac(oyl-L-Ala-gamma-D-Glu-L-Lys-D-Ala-D-Ala)-di-trans,octa-cis-undecaprenyl diphosphate = [GlcNAc-(1-&gt;4)-Mur2Ac(oyl-L-Ala-gamma-D-Glu-L-Lys-D-Ala-D-Ala)](n+1)-di-trans,octa-cis-undecaprenyl diphosphate + di-trans,octa-cis-undecaprenyl diphosphate + H(+). It carries out the reaction Preferential cleavage: (Ac)2-L-Lys-D-Ala-|-D-Ala. Also transpeptidation of peptidyl-alanyl moieties that are N-acyl substituents of D-alanine.. It participates in cell wall biogenesis; peptidoglycan biosynthesis. Functionally, cell wall formation. Synthesis of cross-linked peptidoglycan from the lipid intermediates. The enzyme has a penicillin-insensitive transglycosylase N-terminal domain (formation of linear glycan strands) and a penicillin-sensitive transpeptidase C-terminal domain (cross-linking of the peptide subunits). The polypeptide is Penicillin-binding protein 1A (mrcA) (Rickettsia bellii (strain RML369-C)).